The primary structure comprises 868 residues: DNA mismatch repair protein MutS (868 aa).

Position 620-627 (Gly-620–Ser-627) interacts with ATP.

Belongs to the DNA mismatch repair MutS family.

Functionally, this protein is involved in the repair of mismatches in DNA. It is possible that it carries out the mismatch recognition step. This protein has a weak ATPase activity. The protein is DNA mismatch repair protein MutS of Flavobacterium johnsoniae (strain ATCC 17061 / DSM 2064 / JCM 8514 / BCRC 14874 / CCUG 350202 / NBRC 14942 / NCIMB 11054 / UW101) (Cytophaga johnsonae).